Here is a 300-residue protein sequence, read N- to C-terminus: PTB domain-containing engulfment adapter protein 1 (300 aa).

In terms of domain architecture, PID spans A21 to L176. Residues V160 to V199 are a coiled coil.

Belongs to the ced-6 family.

The protein resides in the cytoplasm. Its function is as follows. May function as an adapter protein. Required for efficient phagocytosis of apoptotic cells. May play a role in the internalization and endosomal trafficking of various lrp1 ligands. The chain is PTB domain-containing engulfment adapter protein 1 (gulp1) from Danio rerio (Zebrafish).